The primary structure comprises 92 residues: Protein canopy homolog 1 (92 aa).

Belongs to the canopy family.

This Homo sapiens (Human) protein is Protein canopy homolog 1 (CNPY1).